Reading from the N-terminus, the 432-residue chain is Pachytene checkpoint protein 2 homolog (432 aa).

Met-1 is modified (N-acetylmethionine). 179-186 is an ATP binding site; it reads GPPGTGKT.

Belongs to the AAA ATPase family. PCH2 subfamily. As to quaternary structure, specifically interacts with the ligand binding domain of the thyroid receptor (TR). This interaction does not require the presence of thyroid hormone for its interaction. Interacts with proteasome subunit PSMA8; to participate in meiosis progression during spermatogenesis.

Functionally, plays a key role in chromosome recombination and chromosome structure development during meiosis. Required at early steps in meiotic recombination that leads to non-crossovers pathways. Also needed for efficient completion of homologous synapsis by influencing crossover distribution along the chromosomes affecting both crossovers and non-crossovers pathways. Also required for development of higher-order chromosome structures and is needed for synaptonemal-complex formation. In males, required for efficient synapsis of the sex chromosomes and for sex body formation. Promotes early steps of the DNA double-strand breaks (DSBs) repair process upstream of the assembly of RAD51 complexes. Required for depletion of HORMAD1 and HORMAD2 from synapsed chromosomes. Plays a role in mitotic spindle assembly checkpoint (SAC) activation. This chain is Pachytene checkpoint protein 2 homolog (Trip13), found in Rattus norvegicus (Rat).